The sequence spans 1022 residues: Histone-lysine N-methyltransferase TRX1 (1022 aa).

The tract at residues 31–151 (SSAPCPLPKK…QRQGVHKEAA (121 aa)) is disordered. Pro residues predominate over residues 65-78 (EGPPPSPATAPPML). Residues 127–139 (GGAERRGYFSEPK) show a composition bias toward basic and acidic residues. The 64-residue stretch at 264 to 327 (PGDLVWAKLT…LKQAVPFLNG (64 aa)) folds into the PWWP domain. The segment covering 367-393 (SMEKGSSDANSNKDVHSCDNLSEDKTA) has biased composition (basic and acidic residues). The tract at residues 367–399 (SMEKGSSDANSNKDVHSCDNLSEDKTAESGGDY) is disordered. The region spanning 402–461 (MTPIELGNLRVSKLGRIVTDSDYFHNKKHIWPEGYTAFRKFRSVKDPHVVILYKMEVLRN) is the FYR N-terminal domain. Residues 465–548 (KARPLFRVTS…SCLKYFENAG (84 aa)) form the FYR C-terminal domain. The segment at 553-609 (GYRAVHVNWKDLDYCSVCDMDEEYEDNLFLQCDKCRMMVHARCYGELEPLNGVLWLC) adopts a Phorbol-ester/DAG-type zinc-finger fold. PHD-type zinc fingers lie at residues 564 to 615 (LDYC…CRPE) and 677 to 744 (LLCS…KKHR). Residues 620–744 (SPRCCLCPVT…RLLSYCKKHR (125 aa)) form an extended PHD domain (ePHD) region. Residues 861 to 979 (RRLAFGKSRI…PWEELTYDYR (119 aa)) form the SET domain. Cys-943 contacts Zn(2+). Tyr-978 is an S-adenosyl-L-methionine binding site. The region spanning 985–1001 (QRLPCYCGFPKCRGVVN) is the Post-SET domain. Zn(2+) is bound by residues Cys-989, Cys-991, and Cys-996.

This sequence belongs to the class V-like SAM-binding methyltransferase superfamily. Histone-lysine methyltransferase family. TRX/MLL subfamily. As to quaternary structure, interacts with EHD3. Expressed in leaf blades and panicles.

It localises to the nucleus. The catalysed reaction is L-lysyl(4)-[histone H3] + S-adenosyl-L-methionine = N(6)-methyl-L-lysyl(4)-[histone H3] + S-adenosyl-L-homocysteine + H(+). Its function is as follows. Possesses histone H3 methyltransferase activity in vitro. Methylates 'Lys-4' of histone H3. H3 'Lys-4' methylation represents a specific tag for epigenetic transcriptional activation. Functions as a receptor for the lipid messenger phosphatidylinositol 5-phosphate (PI5P), which negatively regulates its transcriptional activation activity. Involved in the regulation of flowering time and floral induction under long day (LD) conditions. Acts as an activator of flowering under LD conditions. May function through binding to EHD3, a repressor of GHD7. The protein is Histone-lysine N-methyltransferase TRX1 of Oryza sativa subsp. japonica (Rice).